A 104-amino-acid chain; its full sequence is uncharacterized protein (104 aa).

The protein to A.aeolicus AQ_377.

This is an uncharacterized protein from Archaeoglobus fulgidus (strain ATCC 49558 / DSM 4304 / JCM 9628 / NBRC 100126 / VC-16).